The following is a 226-amino-acid chain: MSILVVTGTGTGIGKTVVTAALACHARLAGLDVAVCKPIQTGTRDGDDDLAVVARLAGVEDLHSLAKFPEPLAPLAAAHRAGADLPSRAALDDLIAAVDRPGRLTLVEGAGGLLVEIGRGGVTLRDLAEDLRAPVLTVVAPGLGTLNHTVLTLEALAHRDVRSEGLVIGSWPAQPGVAEIDNRDALARLGPVRAALPAGAGTLSGTDFERLSVQAFDEAWVRGLVG.

Residue 12–17 coordinates ATP; the sequence is GIGKTV. Thr-16 serves as a coordination point for Mg(2+). The active site involves Lys-37. Thr-41 is a substrate binding site. Residues Asp-49, 108–111, 169–170, and 197–199 contribute to the ATP site; these read EGAG, GS, and PAG. 2 residues coordinate Mg(2+): Asp-49 and Glu-108.

It belongs to the dethiobiotin synthetase family. In terms of assembly, homodimer. Mg(2+) is required as a cofactor.

It localises to the cytoplasm. The catalysed reaction is (7R,8S)-7,8-diammoniononanoate + CO2 + ATP = (4R,5S)-dethiobiotin + ADP + phosphate + 3 H(+). The protein operates within cofactor biosynthesis; biotin biosynthesis; biotin from 7,8-diaminononanoate: step 1/2. Its function is as follows. Catalyzes a mechanistically unusual reaction, the ATP-dependent insertion of CO2 between the N7 and N8 nitrogen atoms of 7,8-diaminopelargonic acid (DAPA, also called 7,8-diammoniononanoate) to form a ureido ring. This chain is ATP-dependent dethiobiotin synthetase BioD, found in Mycolicibacterium gilvum (strain PYR-GCK) (Mycobacterium gilvum (strain PYR-GCK)).